The following is a 234-amino-acid chain: Proteasome subunit beta (234 aa).

The tract at residues 1 to 35 (MNPDLNMNPHDSGRTDPYAPELGEIATDEGDGENV) is disordered. Residues 1–39 (MNPDLNMNPHDSGRTDPYAPELGEIATDEGDGENVTKTG) constitute a propeptide, removed in mature form; by autocatalysis. Residue T40 is the Nucleophile of the active site.

Belongs to the peptidase T1B family. As to quaternary structure, the 20S proteasome core is composed of 14 alpha and 14 beta subunits that assemble into four stacked heptameric rings, resulting in a barrel-shaped structure. The two inner rings, each composed of seven catalytic beta subunits, are sandwiched by two outer rings, each composed of seven alpha subunits. The catalytic chamber with the active sites is on the inside of the barrel. Has a gated structure, the ends of the cylinder being occluded by the N-termini of the alpha-subunits. Is capped at one or both ends by the proteasome regulatory ATPase, PAN.

The protein localises to the cytoplasm. It carries out the reaction Cleavage of peptide bonds with very broad specificity.. With respect to regulation, the formation of the proteasomal ATPase PAN-20S proteasome complex, via the docking of the C-termini of PAN into the intersubunit pockets in the alpha-rings, triggers opening of the gate for substrate entry. Interconversion between the open-gate and close-gate conformations leads to a dynamic regulation of the 20S proteasome proteolysis activity. Its function is as follows. Component of the proteasome core, a large protease complex with broad specificity involved in protein degradation. The polypeptide is Proteasome subunit beta (Halorhabdus utahensis (strain DSM 12940 / JCM 11049 / AX-2)).